Reading from the N-terminus, the 297-residue chain is Band 7 protein AAEL010189 (297 aa).

A compositionally biased stretch (polar residues) spans 1–13 (MGVVESITNSTKP). Residues 1 to 30 (MGVVESITNSTKPGVTKKSSPEAEDDSNGE) form a disordered region. Residues 37–57 (ILIFLSWVLVVLTMPFSLLVC) traverse the membrane as a helical segment.

It belongs to the band 7/mec-2 family.

The protein localises to the membrane. The protein is Band 7 protein AAEL010189 of Aedes aegypti (Yellowfever mosquito).